Consider the following 359-residue polypeptide: Archaemetzincin-2 (359 aa).

Histidine 254 is a binding site for Zn(2+). Residue glutamate 255 is the Proton acceptor of the active site. Zn(2+) contacts are provided by histidine 258, histidine 264, cysteine 265, cysteine 270, cysteine 289, and cysteine 292.

This sequence belongs to the peptidase M54 family. Requires Zn(2+) as cofactor. Predominantly expressed in testis.

Its function is as follows. Probable zinc metalloprotease. In Mus musculus (Mouse), this protein is Archaemetzincin-2 (Amz2).